The following is a 287-amino-acid chain: Nucleotide-binding protein VV0445 (287 aa).

8-15 (GHSGAGKS) lines the ATP pocket. 56 to 59 (DVRN) contacts GTP.

The protein belongs to the RapZ-like family.

Its function is as follows. Displays ATPase and GTPase activities. This Vibrio vulnificus (strain YJ016) protein is Nucleotide-binding protein VV0445.